The sequence spans 250 residues: Triosephosphate isomerase (250 aa).

9 to 11 (NWK) contacts substrate. The active-site Electrophile is histidine 94. Glutamate 166 acts as the Proton acceptor in catalysis. Substrate-binding positions include glycine 172, serine 212, and 233–234 (GG).

The protein belongs to the triosephosphate isomerase family. As to quaternary structure, homodimer.

It is found in the cytoplasm. The catalysed reaction is D-glyceraldehyde 3-phosphate = dihydroxyacetone phosphate. It participates in carbohydrate biosynthesis; gluconeogenesis. The protein operates within carbohydrate degradation; glycolysis; D-glyceraldehyde 3-phosphate from glycerone phosphate: step 1/1. Functionally, involved in the gluconeogenesis. Catalyzes stereospecifically the conversion of dihydroxyacetone phosphate (DHAP) to D-glyceraldehyde-3-phosphate (G3P). In Thermus thermophilus (strain ATCC 27634 / DSM 579 / HB8), this protein is Triosephosphate isomerase.